The following is a 178-amino-acid chain: ATP synthase subunit delta (178 aa).

This sequence belongs to the ATPase delta chain family. In terms of assembly, F-type ATPases have 2 components, F(1) - the catalytic core - and F(0) - the membrane proton channel. F(1) has five subunits: alpha(3), beta(3), gamma(1), delta(1), epsilon(1). F(0) has three main subunits: a(1), b(2) and c(10-14). The alpha and beta chains form an alternating ring which encloses part of the gamma chain. F(1) is attached to F(0) by a central stalk formed by the gamma and epsilon chains, while a peripheral stalk is formed by the delta and b chains.

It localises to the cell inner membrane. In terms of biological role, f(1)F(0) ATP synthase produces ATP from ADP in the presence of a proton or sodium gradient. F-type ATPases consist of two structural domains, F(1) containing the extramembraneous catalytic core and F(0) containing the membrane proton channel, linked together by a central stalk and a peripheral stalk. During catalysis, ATP synthesis in the catalytic domain of F(1) is coupled via a rotary mechanism of the central stalk subunits to proton translocation. This protein is part of the stalk that links CF(0) to CF(1). It either transmits conformational changes from CF(0) to CF(1) or is implicated in proton conduction. The sequence is that of ATP synthase subunit delta from Pseudomonas aeruginosa (strain UCBPP-PA14).